A 779-amino-acid chain; its full sequence is Ribosome-releasing factor 2, mitochondrial (779 aa).

The tr-type G domain occupies 68 to 353 (AKIRNIGIMA…AVTTYLPSPE (286 aa)). GTP-binding positions include 77-84 (AHIDAGKT), 141-145 (DTPGH), and 195-198 (NKMD).

Belongs to the TRAFAC class translation factor GTPase superfamily. Classic translation factor GTPase family. EF-G/EF-2 subfamily.

It localises to the mitochondrion. It catalyses the reaction GTP + H2O = GDP + phosphate + H(+). Functionally, mitochondrial GTPase that mediates the disassembly of ribosomes from messenger RNA at the termination of mitochondrial protein biosynthesis. Acts in collaboration with MRRF. GTP hydrolysis follows the ribosome disassembly and probably occurs on the ribosome large subunit. Not involved in the GTP-dependent ribosomal translocation step during translation elongation. The polypeptide is Ribosome-releasing factor 2, mitochondrial (Gfm2) (Rattus norvegicus (Rat)).